The chain runs to 201 residues: MCAARLAAAAAQSVYAFSARPLAGGEPVSLGSLRGKVLLIENVASLUGTTVRDYTQMNELQRRLGPRGLVVLGFPCNQFGHQENAKNEEILNSLKYVRPGGGFEPNFMLFEKCEVNGAGAHTLFAFLREALPAPSDDATALMTDPKLITWSPVCRNDVAWNFEKFLVGPDGVPLRRYSRRFQTIDIEPDIEALLSQGPSCA.

Phosphoserine is present on Ser32. Residue Sec47 is part of the active site. A non-standard amino acid (selenocysteine) is located at residue Sec47. N6-acetyllysine; alternate is present on residues Lys86, Lys112, and Lys146. An N6-succinyllysine; alternate mark is found at Lys86, Lys112, and Lys146. 2 positions are modified to phosphoserine: Ser195 and Ser199.

The protein belongs to the glutathione peroxidase family. Homotetramer. Interacts with MIEN1. Post-translationally, during periods of oxidative stress, Sec-47 may react with a superoxide radical, irreversibly lose hydroselenide and be converted to dehydroalanine.

The protein resides in the cytoplasm. The protein localises to the mitochondrion. It catalyses the reaction 2 glutathione + H2O2 = glutathione disulfide + 2 H2O. The enzyme catalyses a hydroperoxy polyunsaturated fatty acid + 2 glutathione = a hydroxy polyunsaturated fatty acid + glutathione disulfide + H2O. The catalysed reaction is tert-butyl hydroperoxide + 2 glutathione = tert-butanol + glutathione disulfide + H2O. It carries out the reaction cumene hydroperoxide + 2 glutathione = 2-phenylpropan-2-ol + glutathione disulfide + H2O. It catalyses the reaction (13S)-hydroperoxy-(9Z,11E)-octadecadienoate + 2 glutathione = (13S)-hydroxy-(9Z,11E)-octadecadienoate + glutathione disulfide + H2O. The enzyme catalyses (9S)-hydroperoxy-(10E,12Z)-octadecadienoate + 2 glutathione = (9S)-hydroxy-(10E,12Z)-octadecadienoate + glutathione disulfide + H2O. The catalysed reaction is (5S)-hydroperoxy-(6E,8Z,11Z,14Z)-eicosatetraenoate + 2 glutathione = (5S)-hydroxy-(6E,8Z,11Z,14Z)-eicosatetraenoate + glutathione disulfide + H2O. It carries out the reaction (12S)-hydroperoxy-(5Z,8Z,10E,14Z)-eicosatetraenoate + 2 glutathione = (12S)-hydroxy-(5Z,8Z,10E,14Z)-eicosatetraenoate + glutathione disulfide + H2O. It catalyses the reaction (12R)-hydroperoxy-(5Z,8Z,10E,14Z)-eicosatetraenoate + 2 glutathione = (12R)-hydroxy-(5Z,8Z,10E,14Z)-eicosatetraenoate + glutathione disulfide + H2O. The enzyme catalyses (15S)-hydroperoxy-(5Z,8Z,11Z,13E)-eicosatetraenoate + 2 glutathione = (15S)-hydroxy-(5Z,8Z,11Z,13E)-eicosatetraenoate + glutathione disulfide + H2O. The catalysed reaction is (5S)-hydroperoxy-(6E,8Z,11Z,14Z,17Z)-eicosapentaenoate + 2 glutathione = (5S)-hydroxy-(6E,8Z,11Z,14Z,17Z)-eicosapentaenoate + glutathione disulfide + H2O. It carries out the reaction (12S)-hydroperoxy-(5Z,8Z,10E,14Z,17Z)-eicosapentaenoate + 2 glutathione = (12S)-hydroxy-(5Z,8Z,10E,14Z,17Z)-eicosapentaenoate + glutathione disulfide + H2O. It catalyses the reaction (15S)-hydroperoxy-(5Z,8Z,11Z,13E,17Z)-eicosapentaenoate + 2 glutathione = (15S)-hydroxy-(5Z,8Z,11Z,13E,17Z)-eicosapentaenoate + glutathione disulfide + H2O. The enzyme catalyses (15S)-hydroperoxy-(11Z,13E)-eicosadienoate + 2 glutathione = (15S)-hydroxy-(11Z,13E)-eicosadienoate + glutathione disulfide + H2O. The catalysed reaction is (17S)-hydroperoxy-(4Z,7Z,10Z,13Z,15E,19Z)-docosahexaenoate + 2 glutathione = (17S)-hydroxy-(4Z,7Z,10Z,13Z,15E,19Z)-docosahexaenoate + glutathione disulfide + H2O. In terms of biological role, catalyzes the reduction of hydroperoxides in a glutathione-dependent manner thus regulating cellular redox homeostasis. Can reduce small soluble hydroperoxides such as H2O2, cumene hydroperoxide and tert-butyl hydroperoxide, as well as several fatty acid-derived hydroperoxides. In platelets catalyzes the reduction of 12-hydroperoxyeicosatetraenoic acid, the primary product of the arachidonate 12-lipoxygenase pathway. The protein is Glutathione peroxidase 1 (GPX1) of Pan troglodytes (Chimpanzee).